A 671-amino-acid chain; its full sequence is tRNA(Met) cytidine acetyltransferase TmcA (671 aa).

Residues Gln180, 202–211, and Arg319 each bind ATP; that span reads GRGKSALAGQ. The region spanning 356 to 531 is the N-acetyltransferase domain; that stretch reads QTLWQSDPET…SGCYTAMALL (176 aa). Acetyl-CoA is bound by residues 461-463, 468-474, Glu499, and Arg506; these read IAV and QREGTGR.

It belongs to the RNA cytidine acetyltransferase family. TmcA subfamily.

It is found in the cytoplasm. It catalyses the reaction cytidine(34) in elongator tRNA(Met) + acetyl-CoA + ATP + H2O = N(4)-acetylcytidine(34) in elongator tRNA(Met) + ADP + phosphate + CoA + H(+). It carries out the reaction 2-hydroxyisobutanoyl-CoA + L-lysyl-[protein] = N(6)-(2-hydroxyisobutanoyl)-L-lysyl-[protein] + CoA + H(+). ATP/GTP hydrolysis is stimulated by the addition of acetyl-CoA and tRNA(Met). Binding of acetyl-CoA to TmcA activates both ATPase and tRNA-binding activities. ATP promotes the 2-hydroxyisobutyryltransferase activity. Its function is as follows. Catalyzes the formation of N(4)-acetylcytidine (ac(4)C) at the wobble position of tRNA(Met), by using acetyl-CoA as an acetyl donor and ATP (or GTP). It recognizes the wobble base of tRNA(Met), thus distinguishing between tRNA(Met) and the structurally similar tRNA(Ile2). Could use an RNA helicase motor driven by ATP hydrolysis to deliver the wobble base of tRNA(Met) to the acetyltransferase domain of TmcA. In terms of biological role, also functions as a lysine 2-hydroxyisobutyryltransferase to regulate transcription. Can specifically catalyze the 2-hydroxyisobutyrylation (Khib) of the DNA-binding protein H-NS. Hydroxyisobutyrylation of H-NS decreases its DNA-binding activity, promotes the expression of acid-resistance genes and enhances bacterial survival under extreme acid stress. The sequence is that of tRNA(Met) cytidine acetyltransferase TmcA from Escherichia coli (strain K12).